Reading from the N-terminus, the 243-residue chain is Voltage-gated monoatomic cation channel TMEM109 (243 aa).

An N-terminal signal peptide occupies residues 1–33 (MAGAHSNPSWSRHLFKAVLMVLGALLLVHSASA). At 34-83 (QTHREFASPGQQKRESSADILTEIGRSLKETLDTWLGPETMHVISETLLQ) the chain is on the lumenal side. Residues 84–104 (VMWAISSAISVACFALSGIAA) traverse the membrane as a helical segment. The Cytoplasmic segment spans residues 105–135 (QLLSALGLDGEQLTQVLKLSPSQVQTLLLWG). Residues 136-156 (AAALVIYWLLSLLLGLVLALL) form a helical membrane-spanning segment. The Lumenal segment spans residues 157–185 (GRILGGLKLVLFVAGFVGLVRSVPDPSTR). The helical transmembrane segment at 186 to 205 (ALLLLALLTVFALLSRLTGS) threads the bilayer. The Cytoplasmic portion of the chain corresponds to 206 to 243 (RSSGTHLEAKVRGLERQIEELRGRQRRAAKIPRSMEEE).

In terms of assembly, homooligomer. Interacts with CRYAB; in the cellular response to DNA damage.

The protein resides in the nucleus outer membrane. It localises to the endoplasmic reticulum membrane. It is found in the sarcoplasmic reticulum membrane. It carries out the reaction K(+)(in) = K(+)(out). The catalysed reaction is Ca(2+)(in) = Ca(2+)(out). Functionally, functions as a voltage-gated monoatomic cation channel permeable to both potassium and calcium. Plays a role in the cellular response to DNA damage. The chain is Voltage-gated monoatomic cation channel TMEM109 from Rattus norvegicus (Rat).